A 70-amino-acid polypeptide reads, in one-letter code: Conotoxin Vc6.10 (70 aa).

The first 19 residues, 1 to 19 (MEKLTILLLVAAVLTSTQA), serve as a signal peptide directing secretion. The propeptide occupies 20 to 40 (LIQGGADERQKAKINFLSRSD). 3 disulfides stabilise this stretch: cysteine 43–cysteine 57, cysteine 50–cysteine 62, and cysteine 56–cysteine 69.

It belongs to the conotoxin O2 superfamily. As to expression, expressed by the venom duct.

The protein resides in the secreted. Functionally, inhibits voltage-gated ion channels. This chain is Conotoxin Vc6.10, found in Conus victoriae (Queen Victoria cone).